The chain runs to 1358 residues: Regulatory protein SIR4 (1358 aa).

Polar residues predominate over residues 1–15 (MPNDNKTPNRSSTPK). Disordered regions lie at residues 1-98 (MPND…PHSN), 252-277 (SLSV…SPGI), 356-466 (HDEK…PPEI), 498-544 (VQGE…ISNG), 677-726 (ASTE…EDEQ), 752-787 (VSDS…DLDT), and 913-970 (HSQE…ENLS). Basic and acidic residues predominate over residues 26 to 39 (KIPEREEKSNEVKT). 2 stretches are compositionally biased toward polar residues: residues 49-66 (KSKN…SPHQ) and 75-96 (HKQL…SFPH). Residues 373 to 388 (QKMKEDADLKRMEILK) show a composition bias toward basic and acidic residues. Polar residues predominate over residues 428-437 (QENNYNSTSR). The segment covering 452–464 (KNGENKKIGKRPP) has biased composition (basic and acidic residues). The span at 507 to 517 (RNNTLNVTPSK) shows a compositional bias: polar residues. The residue at position 692 (serine 692) is a Phosphoserine. Over residues 706-720 (FPVSLSQPSKKSFAN) the composition is skewed to polar residues. Over residues 754–766 (DSDDSSSDNDSLT) the composition is skewed to acidic residues. Over residues 777 to 787 (NEIKVTNDLDT) the composition is skewed to basic and acidic residues. Positions 916 to 932 (EQNSSSAKPSQIPTVSS) are enriched in polar residues. Residue lysine 1128 forms a Glycyl lysine isopeptide (Lys-Gly) (interchain with G-Cter in SUMO) linkage. The stretch at 1271-1347 (LSFVDIVLSK…DAKINKLMEK (77 aa)) forms a coiled coil.

As to quaternary structure, homodimer. Interacts with MPS3. Interacts with RIS1. Interacts with SIR1, SIR2 and SIR3. Interacts with YKU80. Interacts with UBP10. Interacts with RAP1 (via C-terminus).

The protein localises to the nucleus. In terms of biological role, the proteins SIR1 through SIR4 are required for transcriptional repression of the silent mating type loci, HML and HMR. The proteins SIR2 through SIR4 repress mulitple loci by modulating chromatin structure. Involves the compaction of chromatin fiber into a more condensed form. In Saccharomyces cerevisiae (strain ATCC 204508 / S288c) (Baker's yeast), this protein is Regulatory protein SIR4 (SIR4).